The chain runs to 356 residues: Phosphoribosylformylglycinamidine cyclo-ligase (356 aa).

This sequence belongs to the AIR synthase family.

The protein localises to the cytoplasm. The enzyme catalyses 2-formamido-N(1)-(5-O-phospho-beta-D-ribosyl)acetamidine + ATP = 5-amino-1-(5-phospho-beta-D-ribosyl)imidazole + ADP + phosphate + H(+). Its pathway is purine metabolism; IMP biosynthesis via de novo pathway; 5-amino-1-(5-phospho-D-ribosyl)imidazole from N(2)-formyl-N(1)-(5-phospho-D-ribosyl)glycinamide: step 2/2. In Desulfotalea psychrophila (strain LSv54 / DSM 12343), this protein is Phosphoribosylformylglycinamidine cyclo-ligase.